A 188-amino-acid chain; its full sequence is Elongation factor P (188 aa).

This sequence belongs to the elongation factor P family.

Its subcellular location is the cytoplasm. It functions in the pathway protein biosynthesis; polypeptide chain elongation. Functionally, involved in peptide bond synthesis. Stimulates efficient translation and peptide-bond synthesis on native or reconstituted 70S ribosomes in vitro. Probably functions indirectly by altering the affinity of the ribosome for aminoacyl-tRNA, thus increasing their reactivity as acceptors for peptidyl transferase. The polypeptide is Elongation factor P (Wolbachia sp. subsp. Brugia malayi (strain TRS)).